The sequence spans 268 residues: Acidic leucine-rich nuclear phosphoprotein 32 family member E (268 aa).

Met1 is subject to N-acetylmethionine. 4 LRR repeats span residues 18–38, 43–64, 65–87, and 89–110; these read EVTE…EGLN, ELEF…PSLN, KLRK…AEKC, and NLTY…EALQ. Lys68 is covalently cross-linked (Glycyl lysine isopeptide (Lys-Gly) (interchain with G-Cter in SUMO2)). An LRRCT domain is found at 123–161; that stretch reads CEITNLEDYRESIFELLQQITYLDGFDQEDNEAPDSEEE. Acidic residues-rich tracts occupy residues 149-216 and 226-247; these read DQED…EEEV and IQDE…EEEE. The tract at residues 149–268 is disordered; that stretch reads DQEDNEAPDS…AEDDGEEEDD (120 aa). Positions 215–268 are ZID domain; that stretch reads EVGLSYLMKEEIQDEEDDDDYVEEGEEEEEEEEGGLRGEKRKRDAEDDGEEEDD. Residues 248–259 show a composition bias toward basic and acidic residues; sequence GGLRGEKRKRDA.

The protein belongs to the ANP32 family. As to quaternary structure, interacts with the importin alpha KPNA1 and KPNA2. Component of a SWR1-like complex, composed of EP400, KAT5/TIP60, TRRAP, BRD8, RUVBL1, RUVBL2, ING3 and ANP32E; the complex does not contain SRCAP. Interacts with H2A.Z/H2AZ1. Phosphorylated. The phosphorylation is nuclear localization signal (NLS)-dependent. In terms of tissue distribution, expressed in peripheral blood leukocytes, colon, small intestine, prostate, thymus, spleen, skeletal muscle, liver and kidney.

It is found in the cytoplasm. The protein localises to the nucleus. Its function is as follows. Histone chaperone that specifically mediates the genome-wide removal of histone H2A.Z/H2AZ1 from the nucleosome: removes H2A.Z/H2AZ1 from its normal sites of deposition, especially from enhancer and insulator regions. Not involved in deposition of H2A.Z/H2AZ1 in the nucleosome. May stabilize the evicted H2A.Z/H2AZ1-H2B dimer, thus shifting the equilibrium towards dissociation and the off-chromatin state. Inhibits activity of protein phosphatase 2A (PP2A). Does not inhibit protein phosphatase 1. May play a role in cerebellar development and synaptogenesis. The polypeptide is Acidic leucine-rich nuclear phosphoprotein 32 family member E (ANP32E) (Homo sapiens (Human)).